Here is a 216-residue protein sequence, read N- to C-terminus: Probable nicotinate-nucleotide adenylyltransferase (216 aa).

Belongs to the NadD family.

The catalysed reaction is nicotinate beta-D-ribonucleotide + ATP + H(+) = deamido-NAD(+) + diphosphate. It functions in the pathway cofactor biosynthesis; NAD(+) biosynthesis; deamido-NAD(+) from nicotinate D-ribonucleotide: step 1/1. Functionally, catalyzes the reversible adenylation of nicotinate mononucleotide (NaMN) to nicotinic acid adenine dinucleotide (NaAD). This is Probable nicotinate-nucleotide adenylyltransferase from Maridesulfovibrio salexigens (strain ATCC 14822 / DSM 2638 / NCIMB 8403 / VKM B-1763) (Desulfovibrio salexigens).